We begin with the raw amino-acid sequence, 639 residues long: Protein argonaute (639 aa).

The N-terminal domain stretch occupies residues Met1 to Asp100. Residues Phe101–Ser153 are linker L1. Positions Lys154–Thr209 are PAZ domain. Residues Thr210–Pro292 are linker L2. The mid domain stretch occupies residues Leu293 to Pro424. Positions Glu425–Tyr639 are PIWI domain. Residues Asp446, Glu482, Asp516, and Asn624 contribute to the active site. Asp446 contacts Mn(2+). Residues Asp516 and Asn624 each contribute to the Mn(2+) site.

Belongs to the argonaute family. Long pAgo subfamily. The cofactor is Mn(2+).

It is found in the cytoplasm. An RNA-guided ssDNA endonuclease that may play a role in defense against invading mobile genetic elements. Uses short 5'-OH-ssRNA sequences as guides (gRNA) to bind complementary target DNA (tDNA) or target RNA resulting in target cleavage. The cleavage site is 10 nucleotides (nt) downstream of the target residue base-paired with the 5'-end of the gRNA. Reaction rates are fastest on 5'-OH-gRNA:tDNA followed by 5'-OH-gRNA:target RNA. gRNA between 17-21 nt supports equivalent rates of cleavage, has no preferred 5'-nt. Has weak activity on tDNA with 5'-phospho-gRNA, yielding products 1-2 nt longer. Unlike other characterized prokaryotic Ago proteins symmetric mismatches centered around the cleavage site reduce cleavage efficiency. The polypeptide is Protein argonaute (Marinitoga piezophila (strain DSM 14283 / JCM 11233 / KA3)).